Consider the following 219-residue polypeptide: N-(5'-phosphoribosyl)anthranilate isomerase (219 aa).

This sequence belongs to the TrpF family.

The catalysed reaction is N-(5-phospho-beta-D-ribosyl)anthranilate = 1-(2-carboxyphenylamino)-1-deoxy-D-ribulose 5-phosphate. Its pathway is amino-acid biosynthesis; L-tryptophan biosynthesis; L-tryptophan from chorismate: step 3/5. This chain is N-(5'-phosphoribosyl)anthranilate isomerase, found in Dehalococcoides mccartyi (strain ATCC BAA-2266 / KCTC 15142 / 195) (Dehalococcoides ethenogenes (strain 195)).